A 60-amino-acid polypeptide reads, in one-letter code: Bowman-Birk type proteinase inhibitor C1 (60 aa).

Intrachain disulfides connect Cys-5/Cys-21, Cys-11/Cys-19, Cys-28/Cys-35, and Cys-32/Cys-49.

The protein belongs to the Bowman-Birk serine protease inhibitor family. Expressed in bulb (at protein level).

In terms of biological role, serine protease inhibitor. Strongly inhibits trypsin (Ki = 0.22 nM) and very weakly inhibits chymotrypsin (Ki = 1200 nM). Does not inhibit bacterial subtilisin. The chain is Bowman-Birk type proteinase inhibitor C1 from Hyacinthus orientalis (Common hyacinth).